The sequence spans 169 residues: Protein-export protein SecB (169 aa).

This sequence belongs to the SecB family. As to quaternary structure, homotetramer, a dimer of dimers. One homotetramer interacts with 1 SecA dimer.

Its subcellular location is the cytoplasm. In terms of biological role, one of the proteins required for the normal export of preproteins out of the cell cytoplasm. It is a molecular chaperone that binds to a subset of precursor proteins, maintaining them in a translocation-competent state. It also specifically binds to its receptor SecA. This is Protein-export protein SecB from Pseudoalteromonas atlantica (strain T6c / ATCC BAA-1087).